We begin with the raw amino-acid sequence, 183 residues long: Microfibrillar-associated protein 2 (183 aa).

The segment at residues 1–17 (MRAAYLFLLFLPAGLLA) is a signal peptide (or 19). Residue glutamine 18 is modified to Pyrrolidone carboxylic acid. Sulfotyrosine is present on residues tyrosine 47, tyrosine 48, and tyrosine 50. The disordered stretch occupies residues 58-94 (SEEQFQFQSQQQVQQEVIPAPTPEPGNAELEPTEPGP). The segment covering 60 to 74 (EQFQFQSQQQVQQEV) has biased composition (low complexity). The region spanning 153–183 (CRDKFSKCGVMASSGLCQSVAASCARSCGSC) is the ShKT domain. 3 disulfide bridges follow: cysteine 153–cysteine 183, cysteine 160–cysteine 176, and cysteine 169–cysteine 180.

The protein belongs to the MFAP family. In terms of assembly, forms a ternary complex with BGN and ELN. Interacts with FBN1 (via N-terminal domain) and FBN2. Post-translationally, forms intermolecular disulfide bonds either with other MAGP-1 molecules or with other components of the microfibrils. May form transglutaminase cross-links. In terms of processing, O-glycosylated.

It is found in the secreted. The protein localises to the extracellular space. Its subcellular location is the extracellular matrix. Component of the elastin-associated microfibrils. The chain is Microfibrillar-associated protein 2 (MFAP2) from Homo sapiens (Human).